The sequence spans 482 residues: MDFNSLRKEIINNNASVKELVNDFFDKIKHKDPEINSYICTTKDNAIEQAENIDKLIQNKEKLPPLAGIPIAIKDNICTKGVATTCASKMLKSFVPPYESTASSKLWSSGGICLGKTNLDEFAMGSSTETSLFGVTSNPWDINRVPGGSSGGSAASVAAGFCAAAIGSDTGGSIRQPASFCGVVGLKPTYGRVSRWGLVAFASSLDQIGPITNTVSDAAEILYSISGKDPFDSTCLDKPVPNYLNDLNKSINGLKIGIIKECFEHPGLNQEVKESVLSGVDRFKALGAEIIEVECPRFNDGIATYYVIAPSEASANLARYDGVKYGYRSKEGSNLVDMTSKSRAKGFGDEVQRRILIGTYALSAGYSDAYYKKAQKVRTLIRKDFDNAFKKVDVLLTPTCPTTAFLKGDYVNDPLSMYLSDLLTVPVNLAGLPAISIPCGFDTKGLPIGLQLIGNVLEEGKILNAANIFEIDAQVIKNRPLF.

Catalysis depends on charge relay system residues K74 and S149. S173 (acyl-ester intermediate) is an active-site residue.

This sequence belongs to the amidase family. GatA subfamily. In terms of assembly, heterotrimer of A, B and C subunits.

The enzyme catalyses L-glutamyl-tRNA(Gln) + L-glutamine + ATP + H2O = L-glutaminyl-tRNA(Gln) + L-glutamate + ADP + phosphate + H(+). Allows the formation of correctly charged Gln-tRNA(Gln) through the transamidation of misacylated Glu-tRNA(Gln) in organisms which lack glutaminyl-tRNA synthetase. The reaction takes place in the presence of glutamine and ATP through an activated gamma-phospho-Glu-tRNA(Gln). In Prochlorococcus marinus (strain MIT 9215), this protein is Glutamyl-tRNA(Gln) amidotransferase subunit A.